The primary structure comprises 289 residues: Bidirectional sugar transporter SWEET10 (289 aa).

The Extracellular portion of the chain corresponds to 1–5 (MAISQ). A helical transmembrane segment spans residues 6 to 26 (AVLATVFGILGNIISFFVCLA). The MtN3/slv 1 domain maps to 11 to 96 (VFGILGNIIS…SLFFFYAPKK (86 aa)). The Cytoplasmic segment spans residues 27-43 (PIPTFVRIYKRKSSEGY). The helical transmembrane segment at 44–64 (QSIPYVISLFSAMLWMYYAMI) threads the bilayer. Residues 65–70 (KKDAMM) lie on the Extracellular side of the membrane. Residues 71–91 (LITINSFAFVVQIVYISLFFF) form a helical membrane-spanning segment. Residues 92-103 (YAPKKEKTLTVK) lie on the Cytoplasmic side of the membrane. The helical transmembrane segment at 104–124 (FVLFVDVLGFGAIFVLTYFII) threads the bilayer. At 125–131 (HANKRVQ) the chain is on the extracellular side. In terms of domain architecture, MtN3/slv 2 spans 131 to 214 (QVLGYICMVF…QMILFLIYKK (84 aa)). Residues 132 to 152 (VLGYICMVFALSVFVAPLGII) traverse the membrane as a helical segment. At 153–165 (RKVIKTKSAEFMP) the chain is on the cytoplasmic side. A helical transmembrane segment spans residues 166–186 (FGLSFFLTLSAVMWFFYGLLL). The Extracellular portion of the chain corresponds to 187-190 (KDMN). A helical membrane pass occupies residues 191–211 (IALPNVLGFIFGVLQMILFLI). The Cytoplasmic segment spans residues 212-289 (YKKPGTKVLE…EKEVFLISKN (78 aa)).

It belongs to the SWEET sugar transporter family. Forms heterooligomers with SWEET8.

The protein localises to the cell membrane. In terms of biological role, mediates both low-affinity uptake and efflux of sugar across the plasma membrane. In Arabidopsis thaliana (Mouse-ear cress), this protein is Bidirectional sugar transporter SWEET10.